The chain runs to 220 residues: GTP cyclohydrolase 1 (220 aa).

The Zn(2+) site is built by Cys-109, His-112, and Cys-180.

It belongs to the GTP cyclohydrolase I family. As to quaternary structure, toroid-shaped homodecamer, composed of two pentamers of five dimers.

The catalysed reaction is GTP + H2O = 7,8-dihydroneopterin 3'-triphosphate + formate + H(+). It functions in the pathway cofactor biosynthesis; 7,8-dihydroneopterin triphosphate biosynthesis; 7,8-dihydroneopterin triphosphate from GTP: step 1/1. This Yersinia pseudotuberculosis serotype O:1b (strain IP 31758) protein is GTP cyclohydrolase 1.